The primary structure comprises 151 residues: UPF0208 membrane protein Ent638_2839 (151 aa).

2 helical membrane-spanning segments follow: residues 46–65 (YAIRFMPPIAVFTLCWQIAL) and 69–91 (LGPAVATALFALSLPMQGLWWLG).

It belongs to the UPF0208 family.

It is found in the cell inner membrane. The protein is UPF0208 membrane protein Ent638_2839 of Enterobacter sp. (strain 638).